A 140-amino-acid polypeptide reads, in one-letter code: Nucleoside diphosphate kinase (140 aa).

The ATP site is built by Lys11, Phe59, Arg87, Thr93, Arg104, and Asn114. His117 functions as the Pros-phosphohistidine intermediate in the catalytic mechanism.

This sequence belongs to the NDK family. As to quaternary structure, homotetramer. The cofactor is Mg(2+).

Its subcellular location is the cytoplasm. The catalysed reaction is a 2'-deoxyribonucleoside 5'-diphosphate + ATP = a 2'-deoxyribonucleoside 5'-triphosphate + ADP. It catalyses the reaction a ribonucleoside 5'-diphosphate + ATP = a ribonucleoside 5'-triphosphate + ADP. Major role in the synthesis of nucleoside triphosphates other than ATP. The ATP gamma phosphate is transferred to the NDP beta phosphate via a ping-pong mechanism, using a phosphorylated active-site intermediate. The polypeptide is Nucleoside diphosphate kinase (Beijerinckia indica subsp. indica (strain ATCC 9039 / DSM 1715 / NCIMB 8712)).